The following is a 679-amino-acid chain: MASEQTIDGAAAIPSGGGDEPFLGLLDVALLAVLIGGAAFYFLRSRKKEEEPTRSYSIQPTTVCTTSASDNSFIKKLKASGRSLVVFYGSQTGTGEEFAGRLAKEGIRYRLKGMVADPEECDMEELLQLKDIDNSLAVFCLATYGEGDPTDNAMEFYEWITSGDVDLSGLNYAVFGLGNKTYEHYNKVAIYVDKRLEELGANRVFELGLGDDDANIEDDFITWKDRFWPAVCDHFGIEGGGEEVLIRQYRLLEQPDVQPDRIYTGEIARLHSIQNQRPPFDAKNPFLAPIKVNRELHKGGGRSCMHIELSIEGSKMRYDAGDHVAMFPVNDKSLVEKLGQLCNADLDTVFSLINTDTDSSKKHPFPCPTTYRTALTHYLEITAIPRTHILKELAEYCTDEKEKELLRSMASISPEGKEKYQSWIQDACRNIVHILEDIKSCRPPIDHVCELLPRLQPRYYSISSSAKLHPTDVHVTAVLVEYKTPTGRINKGVATTYLKNKQPQGSEEVKVPVFIRKSQFRLPTKPETPIIMVGPGTGLAPFRGFIQERQFLRDEGKTVGESILYFGCRKRSEDYIYESELEEWVKKGTLNLKAAFSRDQGKKVYVQHLLEQDADLIWNVIGENKGHFYICGDAKNMAVDVRNILVKILSTKGNMSEADAVQYIKKMEAQKRYSADVWS.

Residues 1–21 are Lumenal-facing; sequence MASEQTIDGAAAIPSGGGDEP. A helical membrane pass occupies residues 22–42; the sequence is FLGLLDVALLAVLIGGAAFYF. Residues 43–679 are Cytoplasmic-facing; it reads LRSRKKEEEP…QKRYSADVWS (637 aa). The 145-residue stretch at 84-228 folds into the Flavodoxin-like domain; the sequence is LVVFYGSQTG…DFITWKDRFW (145 aa). Residues 90-95, 142-145, 177-186, and Asp212 each bind FMN; these read SQTGTG, ATYG, and LGNKTYEHYN. Residues 283–523 form the FAD-binding FR-type domain; it reads KNPFLAPIKV…FIRKSQFRLP (241 aa). Arg302 is a binding site for NADP(+). Residues 458–461, 476–478, Tyr482, and 492–495 each bind FAD; these read RYYS, TAV, and GVAT. Residues Thr537, 597–598, 603–607, and Asp640 contribute to the NADP(+) site; these read SR and KVYVQ. Residue Trp678 coordinates FAD.

Belongs to the NADPH--cytochrome P450 reductase family. The protein in the N-terminal section; belongs to the flavodoxin family. It in the C-terminal section; belongs to the flavoprotein pyridine nucleotide cytochrome reductase family. Interacts with sturkopf. FAD serves as cofactor. FMN is required as a cofactor. In terms of tissue distribution, high in antennae.

It localises to the endoplasmic reticulum membrane. The enzyme catalyses 2 oxidized [cytochrome P450] + NADPH = 2 reduced [cytochrome P450] + NADP(+) + H(+). In terms of biological role, this enzyme is required for electron transfer from NADP to cytochrome p450 in microsomes. It can also provide electron transfer to heme oxygenase and cytochrome b5. May function to clear the olfactory organ (antennae) from accumulating chemicals. This Drosophila melanogaster (Fruit fly) protein is NADPH--cytochrome P450 reductase (Cpr).